A 388-amino-acid polypeptide reads, in one-letter code: Succinate--CoA ligase [ADP-forming] subunit beta (388 aa).

Residues 9 to 244 form the ATP-grasp domain; sequence KQLFARYGLP…QSQEDPREAQ (236 aa). ATP is bound by residues Lys46, 53 to 55, Glu99, Thr102, and Glu107; that span reads GRG. 2 residues coordinate Mg(2+): Asn199 and Asp213. Residues Asn264 and 321–323 contribute to the substrate site; that span reads GIV.

This sequence belongs to the succinate/malate CoA ligase beta subunit family. As to quaternary structure, heterotetramer of two alpha and two beta subunits. The cofactor is Mg(2+).

It catalyses the reaction succinate + ATP + CoA = succinyl-CoA + ADP + phosphate. The enzyme catalyses GTP + succinate + CoA = succinyl-CoA + GDP + phosphate. It participates in carbohydrate metabolism; tricarboxylic acid cycle; succinate from succinyl-CoA (ligase route): step 1/1. Its function is as follows. Succinyl-CoA synthetase functions in the citric acid cycle (TCA), coupling the hydrolysis of succinyl-CoA to the synthesis of either ATP or GTP and thus represents the only step of substrate-level phosphorylation in the TCA. The beta subunit provides nucleotide specificity of the enzyme and binds the substrate succinate, while the binding sites for coenzyme A and phosphate are found in the alpha subunit. This Salmonella choleraesuis (strain SC-B67) protein is Succinate--CoA ligase [ADP-forming] subunit beta.